Consider the following 159-residue polypeptide: Major allergen Mal d 1 (159 aa).

The protein belongs to the BetVI family.

The protein is Major allergen Mal d 1 of Malus domestica (Apple).